The chain runs to 235 residues: Orotidine 5'-phosphate decarboxylase (235 aa).

Substrate is bound by residues D10, K33, 60–69, T123, R185, Q194, G214, and R215; that span reads DLKMNDIPNT. K62 serves as the catalytic Proton donor.

The protein belongs to the OMP decarboxylase family. Type 1 subfamily. Homodimer.

The catalysed reaction is orotidine 5'-phosphate + H(+) = UMP + CO2. It functions in the pathway pyrimidine metabolism; UMP biosynthesis via de novo pathway; UMP from orotate: step 2/2. Functionally, catalyzes the decarboxylation of orotidine 5'-monophosphate (OMP) to uridine 5'-monophosphate (UMP). This Lactobacillus johnsonii (strain CNCM I-12250 / La1 / NCC 533) protein is Orotidine 5'-phosphate decarboxylase.